Consider the following 397-residue polypeptide: MHKIMAINAGSSSLKFQIFTMPGEEVLVKGLIERIGLPDAIFNMSFQNEKIKEIRAINNHGEAVEILLEQLKAHQVINDLSEITGVGHRVAHGGEDFVTSCVVTDEVVKGIEAVTNLAPLHNPANIIGIKTFRELLPNAVSVAVFDTAFHQTIPEENFLYALPYELYEKHHIRKYGFHGTSHKYVAGKAAEVLEKPLEKLKIISCHLGNGASVCAIEAGKSVNTSMGFTPNAGLMMGTRSGTIDATIIPYLVDELGYSLDEVMHMMSSESGVLGVSGISSDFRDIEIAAKEGNSRALLTLRMFTGQICNYIGAYASAMNGCDALLFTAGVGENSPLIRQMVTEQLSYLGVTCHVTKNNAGDMIISNDDEAVKVCIIPTNEELMIARDVEKYAKQTIS.

Mg(2+) is bound at residue N8. K15 contacts ATP. R89 is a binding site for substrate. D146 acts as the Proton donor/acceptor in catalysis. Residues 206 to 210, 281 to 283, and 329 to 333 contribute to the ATP site; these read HLGNG, DFR, and GVGEN. E380 is a binding site for Mg(2+).

The protein belongs to the acetokinase family. In terms of assembly, homodimer. It depends on Mg(2+) as a cofactor. Mn(2+) is required as a cofactor.

It localises to the cytoplasm. The enzyme catalyses acetate + ATP = acetyl phosphate + ADP. It functions in the pathway metabolic intermediate biosynthesis; acetyl-CoA biosynthesis; acetyl-CoA from acetate: step 1/2. In terms of biological role, catalyzes the formation of acetyl phosphate from acetate and ATP. Can also catalyze the reverse reaction. The chain is Acetate kinase 1 from Listeria monocytogenes serotype 4b (strain F2365).